The following is a 160-amino-acid chain: Endoribonuclease YbeY (160 aa).

Zn(2+) contacts are provided by histidine 123, histidine 127, and histidine 133.

The protein belongs to the endoribonuclease YbeY family. The cofactor is Zn(2+).

The protein localises to the cytoplasm. Its function is as follows. Single strand-specific metallo-endoribonuclease involved in late-stage 70S ribosome quality control and in maturation of the 3' terminus of the 16S rRNA. In Roseiflexus sp. (strain RS-1), this protein is Endoribonuclease YbeY.